The chain runs to 423 residues: Diels-Alderase pyiF (423 aa).

Positions 1–17 are cleaved as a signal peptide; that stretch reads MLPSFIFVYSLLATATA. N-linked (GlcNAc...) asparagine glycans are attached at residues Asn-60, Asn-92, and Asn-219.

Belongs to the Diels-Alderase family.

It participates in mycotoxin biosynthesis. In terms of biological role, diels-Alderase; part of the gene cluster that mediates the biosynthesis of the mycotoxin pyrichalasin H, a tyrosine-derived cytochalasan that inhibits the growth of rice seedlings, but also inhibits lymphocyte capping and actin polymerization and alters cell morphology. Pyrichalasin H is indicated as the responsible agent for the genus-specific pathogenicity of M.grisea toward crabgrass. The first step in the pathway is catalyzed by the O-methyltransferase pyiA which methylates free tyrosine to generate the precursor O-methyltyrosine. The hybrid PKS-NRPS pyiS, assisted by the enoyl reductase pyiC, are responsible for fusion of the O-methyltyrosine precursor and the polyketide backbone. The polyketide synthase module (PKS) of pyiS is responsible for the synthesis of the polyketide backbone and the downstream nonribosomal peptide synthetase (NRPS) amidates the carboxyl end of the polyketide with the O-methyltyrosine precursor. As the NRPS A-domain demonstrates substrate tolerance, pyiS can also use phenylalanine, tyrosine and even para-chlorophenylalanine as amino acid precursor, which leads to the production of novel cytochalasans, including halogenated cytochalasans. Because pyiS lacks a designated enoylreductase (ER) domain, the required activity is provided the enoyl reductase pyiC. Reduction by the hydrolyase pyiE leads to 1,5-dihydropyrrolone, which is substrate for dehydration and intra-molecular Diels-Alder cyclization by the Diels-Alderase pyiF to yield the required isoindolone-fused macrocycle. The tailoring cytochrome P450 monooxygenases piyD and piyG catalyze the hydroxylation at C-18 and C-7, respectivily, whereas the short-chain dehydrogenase/reductase pyiH reduces the carbonyl at C-21 in preparation for the transfer of an acetyl group by the acetyltransferase pyiB. These 3 reactions whose order is not clear yet, lead to the production of O-methylpyrichalasin J, a deacetylated pyrichalasin H. Finally, pyiB to converts O-methylpyrichalasin J into the final product pyrichalasin H via acetylation of C-21. In Pyricularia grisea (Crabgrass-specific blast fungus), this protein is Diels-Alderase pyiF.